A 939-amino-acid polypeptide reads, in one-letter code: Valine--tRNA ligase (939 aa).

The short motif at 47–57 (PNVTGILHMGH) is the 'HIGH' region element. Residues 563-567 (KLSKS) carry the 'KMSKS' region motif. Lysine 566 contacts ATP. Residues 874-939 (EHLAKERVRL…QSILDKLASL (66 aa)) adopt a coiled-coil conformation.

Belongs to the class-I aminoacyl-tRNA synthetase family. ValS type 1 subfamily. In terms of assembly, monomer.

The protein resides in the cytoplasm. The catalysed reaction is tRNA(Val) + L-valine + ATP = L-valyl-tRNA(Val) + AMP + diphosphate. Functionally, catalyzes the attachment of valine to tRNA(Val). As ValRS can inadvertently accommodate and process structurally similar amino acids such as threonine, to avoid such errors, it has a 'posttransfer' editing activity that hydrolyzes mischarged Thr-tRNA(Val) in a tRNA-dependent manner. The polypeptide is Valine--tRNA ligase (Chlamydia trachomatis serovar L2 (strain ATCC VR-902B / DSM 19102 / 434/Bu)).